Consider the following 252-residue polypeptide: Imidazole glycerol phosphate synthase subunit HisF (252 aa).

Catalysis depends on residues aspartate 11 and aspartate 130.

It belongs to the HisA/HisF family. In terms of assembly, heterodimer of HisH and HisF.

The protein localises to the cytoplasm. It carries out the reaction 5-[(5-phospho-1-deoxy-D-ribulos-1-ylimino)methylamino]-1-(5-phospho-beta-D-ribosyl)imidazole-4-carboxamide + L-glutamine = D-erythro-1-(imidazol-4-yl)glycerol 3-phosphate + 5-amino-1-(5-phospho-beta-D-ribosyl)imidazole-4-carboxamide + L-glutamate + H(+). It functions in the pathway amino-acid biosynthesis; L-histidine biosynthesis; L-histidine from 5-phospho-alpha-D-ribose 1-diphosphate: step 5/9. In terms of biological role, IGPS catalyzes the conversion of PRFAR and glutamine to IGP, AICAR and glutamate. The HisF subunit catalyzes the cyclization activity that produces IGP and AICAR from PRFAR using the ammonia provided by the HisH subunit. The chain is Imidazole glycerol phosphate synthase subunit HisF from Alkaliphilus metalliredigens (strain QYMF).